The chain runs to 275 residues: 4-hydroxy-tetrahydrodipicolinate reductase (275 aa).

NAD(+) contacts are provided by residues 13–18 and 108–110; these read GAAGKM and GTT. His-164 acts as the Proton donor/acceptor in catalysis. His-165 serves as a coordination point for (S)-2,3,4,5-tetrahydrodipicolinate. Lys-168 serves as the catalytic Proton donor. Residue 174–175 coordinates (S)-2,3,4,5-tetrahydrodipicolinate; sequence GT.

The protein belongs to the DapB family.

The protein localises to the cytoplasm. It catalyses the reaction (S)-2,3,4,5-tetrahydrodipicolinate + NAD(+) + H2O = (2S,4S)-4-hydroxy-2,3,4,5-tetrahydrodipicolinate + NADH + H(+). The enzyme catalyses (S)-2,3,4,5-tetrahydrodipicolinate + NADP(+) + H2O = (2S,4S)-4-hydroxy-2,3,4,5-tetrahydrodipicolinate + NADPH + H(+). It participates in amino-acid biosynthesis; L-lysine biosynthesis via DAP pathway; (S)-tetrahydrodipicolinate from L-aspartate: step 4/4. Catalyzes the conversion of 4-hydroxy-tetrahydrodipicolinate (HTPA) to tetrahydrodipicolinate. The chain is 4-hydroxy-tetrahydrodipicolinate reductase from Acaryochloris marina (strain MBIC 11017).